The primary structure comprises 590 residues: MNPLGLFLIYLYTCALTPVSGYPNGKVTSACRSMRPDHGHAPQSEPIHSINVEKTIFKPGDRIKVTLSGSRFDGFLVQARDAENLEGSAVGSFSLTDERISQLLTCDGIQNSAVSHTSKERKLQVELFWIAPANSPKHIQFLATVVEKYKIYWVKIPGPIISQPKAPSIAPKIPSSTIPVVPPPSLSLHKRFNSAGCGSSKFCIRNPVSCDPEHNPECFFLSFRKDGQSVLVEMSGPGQGYISFALSHDQWMGDDDAYLCVKEDDGVQINPAYIRGRSHPEVSSMDVLRDVAWRLEDGVIQCSFRRNIQIPIPKERFDLGRSYFIFLADGDAKDGLLYRHHRQPLMTNRKYCITDFPEDVGGSRSPLIIKLHGAMMFIAWMTTVSIGVIIARFFKPVWPTSSLFGEKIWFQIHRCLMITTVFLTVVAFVLPFIYRGYFSKRAGYHPHLGVTVMILTVLQPVLAVFRPPPQTHRRGIFNWTHWATGTAARIIAVAAMFLGMDLQALDLPDPWDTYTMIGFVLWHVFVDLLLEAHGFCLLKKAKTMEEDQIGILNSSPDEAEGHTFKKIVMTVYICGNLAFLITFLAAINQL.

Residues 2–22 (NPLGLFLIYLYTCALTPVSGY) form a helical membrane-spanning segment. The 168-residue stretch at 12 to 179 (YTCALTPVSG…APKIPSSTIP (168 aa)) folds into the Reelin domain. A DOMON domain is found at 217–330 (ECFFLSFRKD…RSYFIFLADG (114 aa)). The Cytochrome b561 domain maps to 334-533 (DGLLYRHHRQ…VFVDLLLEAH (200 aa)). Residues 371-391 (LHGAMMFIAWMTTVSIGVIIA) traverse the membrane as a helical segment. Positions 372 and 413 each coordinate heme b. Helical transmembrane passes span 416–436 (LMITTVFLTVVAFVLPFIYRG) and 445–465 (HPHLGVTVMILTVLQPVLAVF). A heme b-binding site is contributed by His445. An N-linked (GlcNAc...) asparagine glycan is attached at Asn478. Heme b is bound at residue His481. 3 consecutive transmembrane segments (helical) span residues 482 to 502 (WATGTAARIIAVAAMFLGMDL), 517 to 537 (IGFVLWHVFVDLLLEAHGFCL), and 567 to 587 (IVMTVYICGNLAFLITFLAAI).

It belongs to the FRRS1 family. Heme b is required as a cofactor.

The protein resides in the membrane. Functionally, putative ferric-chelate reductases reduce Fe(3+) to Fe(2+) before its transport from the endosome to the cytoplasm. The protein is Putative ferric-chelate reductase 1 (frrs1) of Xenopus laevis (African clawed frog).